A 514-amino-acid chain; its full sequence is MGKDFRYYFQHPWSRMIVAYLVIFFNFLIFAEDPVSHSQTEANVIVVGNCFSFVTNKYPRGVGWRILKVLLWLLAILIGLIAGKFLFHQRLFGQLLRLKMFREDHGSWMTMFFSTILFLFIFSHIYNTILLMDGNMGAYLITDYMGIRNESFMKLAAVGTWMGDFVTAWMVTDMMLQDKPYPDWGKSARAFWKKGNVRIILFWTVLFTLTSVVVLVITTDWISWDKLNRGFLPSDEVSRAFLASFILVFDLLIVMQDWEFPHFMGDVDVNLPGLHTPHMQFKIPFFQKIFKEEYRIHITGKWFNYGIIFLVLILDLNMWKNQIFYKPHEYGQYIGPGQKIYTVKDSESLKDLNRTKLSWEWRSNHTNPQTNKTYVEGDMFLHSRFIGASLDVKCLAFVPSLIAFVWFGFFIWFFGRFLKNEQGMENQDKTYTRMKRKSPSEHSKDMGITRENTQVSVEDPLNDPALVCIRSDFNEIVYKSSHLTSENLSLHLKESTSEVEAEQEPAASQRMRTN.

Residues 1–15 lie on the Cytoplasmic side of the membrane; sequence MGKDFRYYFQHPWSR. Residues 16-36 form a helical membrane-spanning segment; that stretch reads MIVAYLVIFFNFLIFAEDPVS. Over 37–65 the chain is Extracellular; the sequence is HSQTEANVIVVGNCFSFVTNKYPRGVGWR. The helical transmembrane segment at 66-86 threads the bilayer; that stretch reads ILKVLLWLLAILIGLIAGKFL. Topologically, residues 87–110 are cytoplasmic; that stretch reads FHQRLFGQLLRLKMFREDHGSWMT. Residues 111–131 form a helical membrane-spanning segment; that stretch reads MFFSTILFLFIFSHIYNTILL. Residues 132-154 are Extracellular-facing; that stretch reads MDGNMGAYLITDYMGIRNESFMK. The chain crosses the membrane as a helical span at residues 155 to 175; it reads LAAVGTWMGDFVTAWMVTDMM. Topologically, residues 176–198 are cytoplasmic; sequence LQDKPYPDWGKSARAFWKKGNVR. Residues 199–219 traverse the membrane as a helical segment; the sequence is IILFWTVLFTLTSVVVLVITT. Over 220–239 the chain is Extracellular; the sequence is DWISWDKLNRGFLPSDEVSR. The helical transmembrane segment at 240–260 threads the bilayer; sequence AFLASFILVFDLLIVMQDWEF. At 261 to 295 the chain is on the cytoplasmic side; it reads PHFMGDVDVNLPGLHTPHMQFKIPFFQKIFKEEYR. Residues 296–316 traverse the membrane as a helical segment; it reads IHITGKWFNYGIIFLVLILDL. Topologically, residues 317 to 394 are extracellular; it reads NMWKNQIFYK…FIGASLDVKC (78 aa). N-linked (GlcNAc...) asparagine glycosylation is found at asparagine 353 and asparagine 371. The helical transmembrane segment at 395-415 threads the bilayer; it reads LAFVPSLIAFVWFGFFIWFFG. Topologically, residues 416 to 514 are cytoplasmic; sequence RFLKNEQGME…PAASQRMRTN (99 aa). The interval 430-450 is disordered; it reads TYTRMKRKSPSEHSKDMGITR. Basic and acidic residues predominate over residues 438–448; that stretch reads SPSEHSKDMGI. Threonine 453 carries the post-translational modification Phosphothreonine. The disordered stretch occupies residues 494-514; it reads ESTSEVEAEQEPAASQRMRTN.

The protein belongs to the TMEM117 family.

It is found in the cell membrane. Its function is as follows. Involved in endoplasmic reticulum (ER) stress-induced cell death pathway. This Mus musculus (Mouse) protein is Transmembrane protein 117 (Tmem117).